A 156-amino-acid chain; its full sequence is 6,7-dimethyl-8-ribityllumazine synthase (156 aa).

5-amino-6-(D-ribitylamino)uracil-binding positions include phenylalanine 23, 57-59 (AYE), and 81-83 (AII). Residue 86–87 (GT) participates in (2S)-2-hydroxy-3-oxobutyl phosphate binding. The active-site Proton donor is histidine 89. 5-amino-6-(D-ribitylamino)uracil is bound at residue phenylalanine 114. Arginine 128 lines the (2S)-2-hydroxy-3-oxobutyl phosphate pocket.

This sequence belongs to the DMRL synthase family.

The catalysed reaction is (2S)-2-hydroxy-3-oxobutyl phosphate + 5-amino-6-(D-ribitylamino)uracil = 6,7-dimethyl-8-(1-D-ribityl)lumazine + phosphate + 2 H2O + H(+). The protein operates within cofactor biosynthesis; riboflavin biosynthesis; riboflavin from 2-hydroxy-3-oxobutyl phosphate and 5-amino-6-(D-ribitylamino)uracil: step 1/2. In terms of biological role, catalyzes the formation of 6,7-dimethyl-8-ribityllumazine by condensation of 5-amino-6-(D-ribitylamino)uracil with 3,4-dihydroxy-2-butanone 4-phosphate. This is the penultimate step in the biosynthesis of riboflavin. The polypeptide is 6,7-dimethyl-8-ribityllumazine synthase (Helicobacter pylori (strain Shi470)).